We begin with the raw amino-acid sequence, 321 residues long: Lipoyl synthase (321 aa).

Residues cysteine 68, cysteine 73, cysteine 79, cysteine 94, cysteine 98, cysteine 101, and serine 308 each contribute to the [4Fe-4S] cluster site. Residues 80–297 (FNHGTATFMI…RVFAEEIGFT (218 aa)) enclose the Radical SAM core domain.

This sequence belongs to the radical SAM superfamily. Lipoyl synthase family. [4Fe-4S] cluster serves as cofactor.

Its subcellular location is the cytoplasm. It catalyses the reaction [[Fe-S] cluster scaffold protein carrying a second [4Fe-4S](2+) cluster] + N(6)-octanoyl-L-lysyl-[protein] + 2 oxidized [2Fe-2S]-[ferredoxin] + 2 S-adenosyl-L-methionine + 4 H(+) = [[Fe-S] cluster scaffold protein] + N(6)-[(R)-dihydrolipoyl]-L-lysyl-[protein] + 4 Fe(3+) + 2 hydrogen sulfide + 2 5'-deoxyadenosine + 2 L-methionine + 2 reduced [2Fe-2S]-[ferredoxin]. Its pathway is protein modification; protein lipoylation via endogenous pathway; protein N(6)-(lipoyl)lysine from octanoyl-[acyl-carrier-protein]: step 2/2. Functionally, catalyzes the radical-mediated insertion of two sulfur atoms into the C-6 and C-8 positions of the octanoyl moiety bound to the lipoyl domains of lipoate-dependent enzymes, thereby converting the octanoylated domains into lipoylated derivatives. The polypeptide is Lipoyl synthase (Shewanella woodyi (strain ATCC 51908 / MS32)).